Here is a 1008-residue protein sequence, read N- to C-terminus: Probable beta-galactosidase B (1008 aa).

Positions 1-18 are cleaved as a signal peptide; it reads MLLQSLFAWALAIGPCIA. Asn-20 and Asn-23 each carry an N-linked (GlcNAc...) asparagine glycan. Tyr-87 contacts substrate. Asn-108 carries N-linked (GlcNAc...) asparagine glycosylation. Residues Asn-132, Ala-133, Glu-134, and Asn-192 each coordinate substrate. Glu-193 (proton donor) is an active-site residue. The N-linked (GlcNAc...) asparagine glycan is linked to Asn-208. Tyr-262 provides a ligand contact to substrate. The cysteines at positions 268 and 321 are disulfide-linked. A glycan (N-linked (GlcNAc...) asparagine) is linked at Asn-269. The active-site Nucleophile is the Glu-305. Tyr-370 contacts substrate. Residues Asn-453, Asn-594, Asn-624, Asn-681, Asn-703, Asn-782, Asn-788, Asn-816, Asn-826, and Asn-879 are each glycosylated (N-linked (GlcNAc...) asparagine).

Belongs to the glycosyl hydrolase 35 family.

It localises to the secreted. The enzyme catalyses Hydrolysis of terminal non-reducing beta-D-galactose residues in beta-D-galactosides.. Functionally, cleaves beta-linked terminal galactosyl residues from gangliosides, glycoproteins, and glycosaminoglycans. The protein is Probable beta-galactosidase B (lacB) of Sclerotinia sclerotiorum (strain ATCC 18683 / 1980 / Ss-1) (White mold).